Consider the following 429-residue polypeptide: GTPase Obg (429 aa).

In terms of domain architecture, Obg spans 1–158 (MFVDQVKIYV…RNVQLELKVL (158 aa)). The disordered stretch occupies residues 124–145 (RGNKRFATPANPAPELSENGEP). The 171-residue stretch at 159-329 (ADVGLVGFPS…LLLAIADKLE (171 aa)) folds into the OBG-type G domain. GTP-binding positions include 165–172 (GFPSVGKS), 190–194 (FTTIV), 212–215 (DLPG), 282–285 (NKMD), and 310–312 (SAV). Mg(2+) is bound by residues serine 172 and threonine 192. The OCT domain occupies 351–429 (KYVADEPDFE…LLDYEFEFMD (79 aa)).

This sequence belongs to the TRAFAC class OBG-HflX-like GTPase superfamily. OBG GTPase family. In terms of assembly, monomer. It depends on Mg(2+) as a cofactor.

Its subcellular location is the cytoplasm. Functionally, an essential GTPase which binds GTP, GDP and possibly (p)ppGpp with moderate affinity, with high nucleotide exchange rates and a fairly low GTP hydrolysis rate. Plays a role in control of the cell cycle, stress response, ribosome biogenesis and in those bacteria that undergo differentiation, in morphogenesis control. This chain is GTPase Obg, found in Listeria monocytogenes serotype 4a (strain HCC23).